The sequence spans 192 residues: Spermatogenesis-associated protein 3 (192 aa).

Basic residues predominate over residues 1-15 (MKKVKKKRSEARRHR). 2 disordered regions span residues 1-65 (MKKV…TTSR) and 161-184 (SRKP…GSGG). Low complexity predominate over residues 19–59 (SQHASSNSTSQQPSPESTPQQPSPESTPQQPSPESTPQHSS).

Its subcellular location is the cell projection. It localises to the cilium. The protein resides in the flagellum. This chain is Spermatogenesis-associated protein 3 (SPATA3), found in Homo sapiens (Human).